Consider the following 269-residue polypeptide: Protein IAL1 (269 aa).

The 102-residue stretch at Ser32–Leu133 folds into the LOB domain.

This sequence belongs to the LOB domain-containing protein family. As to expression, expressed in leaves, leaf primordia, immature ears, immature tassels, whole ovules, silk and husk leaves.

The protein resides in the nucleus. The chain is Protein IAL1 from Zea mays (Maize).